A 607-amino-acid polypeptide reads, in one-letter code: COMPASS component cclA (607 aa).

Positions 1 to 19 (MASTHAAGSPAPSSSINSP) are enriched in low complexity. 2 disordered regions span residues 1 to 22 (MASTHAAGSPAPSSSINSPILH) and 34 to 86 (GEGS…KSVA). Basic residues predominate over residues 57-69 (SKRNKRDSRKKRE). The 220-residue stretch at 157-376 (IADTDFPHIK…YAFNLKETPA (220 aa)) folds into the B30.2/SPRY domain. The tract at residues 587–607 (NTPITDVPVPPEPEDTPMTGG) is disordered.

This sequence belongs to the cclA family. In terms of assembly, component of the COMPASS complex.

It localises to the nucleus. Its subcellular location is the chromosome. It is found in the telomere. Its function is as follows. Component of the COMPASS (Set1C) complex that specifically mono-, di- and trimethylates histone H3 to form H3K4me1/2/3, which subsequently plays a role in telomere length maintenance and transcription elongation regulation. Controls the production of several secondary metabolites, including monodictyphenone, emodin and emodin derivatives, as well as two anti-osteoporosis polyketides, F9775A and F9775B. The sequence is that of COMPASS component cclA from Emericella nidulans (strain FGSC A4 / ATCC 38163 / CBS 112.46 / NRRL 194 / M139) (Aspergillus nidulans).